The following is a 211-amino-acid chain: Thiamine-phosphate synthase (211 aa).

4-amino-2-methyl-5-(diphosphooxymethyl)pyrimidine-binding positions include 37–41 and Asn-69; that span reads QLRIK. Mg(2+) is bound by residues Asp-70 and Asp-89. Ser-108 is a 4-amino-2-methyl-5-(diphosphooxymethyl)pyrimidine binding site. Residue 134-136 coordinates 2-[(2R,5Z)-2-carboxy-4-methylthiazol-5(2H)-ylidene]ethyl phosphate; sequence TQT. A 4-amino-2-methyl-5-(diphosphooxymethyl)pyrimidine-binding site is contributed by Lys-137. 2-[(2R,5Z)-2-carboxy-4-methylthiazol-5(2H)-ylidene]ethyl phosphate contacts are provided by residues Gly-166 and 186–187; that span reads VS.

The protein belongs to the thiamine-phosphate synthase family. Mg(2+) is required as a cofactor.

It catalyses the reaction 2-[(2R,5Z)-2-carboxy-4-methylthiazol-5(2H)-ylidene]ethyl phosphate + 4-amino-2-methyl-5-(diphosphooxymethyl)pyrimidine + 2 H(+) = thiamine phosphate + CO2 + diphosphate. It carries out the reaction 2-(2-carboxy-4-methylthiazol-5-yl)ethyl phosphate + 4-amino-2-methyl-5-(diphosphooxymethyl)pyrimidine + 2 H(+) = thiamine phosphate + CO2 + diphosphate. The catalysed reaction is 4-methyl-5-(2-phosphooxyethyl)-thiazole + 4-amino-2-methyl-5-(diphosphooxymethyl)pyrimidine + H(+) = thiamine phosphate + diphosphate. The protein operates within cofactor biosynthesis; thiamine diphosphate biosynthesis; thiamine phosphate from 4-amino-2-methyl-5-diphosphomethylpyrimidine and 4-methyl-5-(2-phosphoethyl)-thiazole: step 1/1. Its function is as follows. Condenses 4-methyl-5-(beta-hydroxyethyl)thiazole monophosphate (THZ-P) and 2-methyl-4-amino-5-hydroxymethyl pyrimidine pyrophosphate (HMP-PP) to form thiamine monophosphate (TMP). This Salmonella paratyphi A (strain ATCC 9150 / SARB42) protein is Thiamine-phosphate synthase.